The primary structure comprises 1280 residues: Dynactin subunit 1 (1280 aa).

The tract at residues 1–26 (MAQSKRHMYNRTPSGSRMSTEASARP) is disordered. Residues 11–22 (RTPSGSRMSTEA) are compositionally biased toward polar residues. The CAP-Gly domain maps to 48–90 (GATLFATGKWVGVILDEAKGKNDGTVQGRKYFTCDEGHGIFVR). The disordered stretch occupies residues 99–223 (DGADTTSPET…SKEEEGLRDQ (125 aa)). A compositionally biased stretch (polar residues) spans 102–114 (DTTSPETPDSSAS). T108, T145, T146, and T147 each carry phosphothreonine. Residues 129-152 (SKLRGLKPKKAPTARKTTTRRPKP) are compositionally biased toward basic residues. Positions 161–205 (AGPSSSLGPSGSASAGELSSSEPSTPAQTPLAAPIIPTPALTSPG) are enriched in low complexity. S179 is modified (phosphoserine; by PLK1). Phosphoserine; by CDK1 is present on S212. Residues 214–223 (SKEEEGLRDQ) show a composition bias toward basic and acidic residues. Coiled coils occupy residues 214-513 (SKEE…ADYQ) and 942-1048 (LKLE…EGLR). The tract at residues 910-1280 (EYDAERPPSK…LHQLHGRLIS (371 aa)) is interaction with HPS6. Residues 1064 to 1089 (GEEQQRGGTPGQAPGALPGPGPVKDS) are disordered. Positions 1184 to 1213 (SAQLMEQVAQLKSLSDTIEKLKDEVLKETV) form a coiled coil.

It belongs to the dynactin 150 kDa subunit family. As to quaternary structure, monomer and homodimer. Subunit of dynactin, a multiprotein complex part of a tripartite complex with dynein and a adapter, such as BICDL1, BICD2 or HOOK3. The dynactin complex is built around ACTR1A/ACTB filament and consists of an actin-related filament composed of a shoulder domain, a pointed end and a barbed end. Its length is defined by its flexible shoulder domain. The soulder is composed of 2 DCTN1 subunits, 4 DCTN2 and 2 DCTN3. DCTN1/p150(glued) binds directly to microtubules and to cytoplasmic dynein. The 4 DCNT2 (via N-terminus) bind the ACTR1A filament and act as molecular rulers to determine the length. The pointed end is important for binding dynein-dynactin cargo adapters. Consists of 4 subunits: ACTR10, DCNT4, DCTN5 and DCTN6. The barbed end is composed of a CAPZA1:CAPZB heterodimers, which binds ACTR1A/ACTB filament and dynactin and stabilizes dynactin. Interacts with the C-terminus of MAPRE1, MAPRE2 and MAPRE3. Interacts (via C-terminus) with SNX6. Interacts with CLN3, DYNAP, ECPAS and FBXL5. Interacts with MISP; this interaction regulates its distribution at the cell cortex. Interacts with CEP131. Interacts with CEP126. Interacts with CLIP1. Interacts with dynein intermediate chain and dynein heavy chain. Interacts with PLK1 (via POLO-box domain). Interacts with TBCB. Binds preferentially to tyrosinated microtubules than to detyrosinated microtubules. Interacts with PARD6A. Interacts with HPS6. Interacts with KIF3A. Interacts with BICD2. Interacts with DST (isoform 9). Interacts with DST (isoform 1). Identified in a complex with MREG and RILP. Interacts with BCCIP (isoform 2/alpha). Interacts with DCDC1. Interacts with AKNA. Interacts with DYNC1I2. Interacts with RUFY3 and RUFY4. In terms of processing, ubiquitinated by a SCF complex containing FBXL5, leading to its degradation by the proteasome. Phosphorylation by SLK at Thr-145, Thr-146 and Thr-147 targets DCTN1 to the centrosome. It is uncertain if SLK phosphorylates all three threonines or one or two of them. PLK1-mediated phosphorylation at Ser-179 is essential for its localization in the nuclear envelope and promotes its dissociation from microtubules during early mitosis and positively regulates nuclear envelope breakdown during prophase. In terms of tissue distribution, ubiquitous with a high level expression observed in the brain (at protein level).

Its subcellular location is the cytoplasm. It localises to the cytoskeleton. It is found in the microtubule organizing center. The protein localises to the centrosome. The protein resides in the centriole. Its subcellular location is the spindle. It localises to the nucleus envelope. It is found in the cell cortex. Its function is as follows. Part of the dynactin complex that activates the molecular motor dynein for ultra-processive transport along microtubules. Plays a key role in dynein-mediated retrograde transport of vesicles and organelles along microtubules by recruiting and tethering dynein to microtubules. Binds to both dynein and microtubules providing a link between specific cargos, microtubules and dynein. Essential for targeting dynein to microtubule plus ends, recruiting dynein to membranous cargos and enhancing dynein processivity (the ability to move along a microtubule for a long distance without falling off the track). Can also act as a brake to slow the dynein motor during motility along the microtubule. Can regulate microtubule stability by promoting microtubule formation, nucleation and polymerization and by inhibiting microtubule catastrophe in neurons. Inhibits microtubule catastrophe by binding both to microtubules and to tubulin, leading to enhanced microtubule stability along the axon. Plays a role in metaphase spindle orientation. Plays a role in centriole cohesion and subdistal appendage organization and function. Its recruitment to the centriole in a KIF3A-dependent manner is essential for the maintenance of centriole cohesion and the formation of subdistal appendage. Also required for microtubule anchoring at the mother centriole. Plays a role in primary cilia formation. This Rattus norvegicus (Rat) protein is Dynactin subunit 1 (Dctn1).